The chain runs to 418 residues: Serine hydroxymethyltransferase (418 aa).

Residues Leu-121 and 125–127 contribute to the (6S)-5,6,7,8-tetrahydrofolate site; that span reads GHL. An N6-(pyridoxal phosphate)lysine modification is found at Lys-230. Residues Glu-246 and 355-357 each bind (6S)-5,6,7,8-tetrahydrofolate; that span reads SPF.

This sequence belongs to the SHMT family. Homodimer. Pyridoxal 5'-phosphate is required as a cofactor.

The protein localises to the cytoplasm. It catalyses the reaction (6R)-5,10-methylene-5,6,7,8-tetrahydrofolate + glycine + H2O = (6S)-5,6,7,8-tetrahydrofolate + L-serine. Its pathway is one-carbon metabolism; tetrahydrofolate interconversion. It participates in amino-acid biosynthesis; glycine biosynthesis; glycine from L-serine: step 1/1. In terms of biological role, catalyzes the reversible interconversion of serine and glycine with tetrahydrofolate (THF) serving as the one-carbon carrier. This reaction serves as the major source of one-carbon groups required for the biosynthesis of purines, thymidylate, methionine, and other important biomolecules. Also exhibits THF-independent aldolase activity toward beta-hydroxyamino acids, producing glycine and aldehydes, via a retro-aldol mechanism. The protein is Serine hydroxymethyltransferase of Streptococcus pneumoniae (strain ATCC 700669 / Spain 23F-1).